Reading from the N-terminus, the 288-residue chain is Solute carrier family 25 member 45 (288 aa).

Solcar repeat units follow at residues 1–83 (MPVE…TLLA), 97–191 (PSYT…LCRQ), and 199–286 (PSSA…LLRL). Transmembrane regions (helical) follow at residues 6 to 26 (FVAGWISGAVGLVLGHPFDTV), 58 to 78 (GMSFPIASVALVNSVLFGVYS), 102 to 122 (IFIAGCTGGLLQAYCLAPFDL), 166 to 186 (GSWALVLRDTPTLGMYFVTYE), 202 to 222 (ATVLVAGGFAGIASWITATPF), and 266 to 286 (SARAFPVNAATFLSYEYLLRL).

It belongs to the mitochondrial carrier (TC 2.A.29) family. Widely expressed, with highest levels in testis, liver and kidney and low levels in brain, including cortex, cerebellum, hippocampus and hypothalamus, and heart.

The protein localises to the mitochondrion inner membrane. This is Solute carrier family 25 member 45 (Slc25a45) from Mus musculus (Mouse).